A 261-amino-acid chain; its full sequence is Auxin-responsive protein IAA10 (261 aa).

Positions methionine 1–threonine 43 are disordered. Positions leucine 45 to leucine 49 match the EAR-like (transcriptional repression) motif. The segment at leucine 62–threonine 90 is disordered. The segment covering aspartate 80–alanine 89 has biased composition (low complexity). In terms of domain architecture, PB1 spans serine 151–threonine 253.

The protein belongs to the Aux/IAA family. As to quaternary structure, homodimers and heterodimers. In terms of tissue distribution, preferentially expressed in vegetative organs.

It localises to the nucleus. Its function is as follows. Aux/IAA proteins are short-lived transcriptional factors that function as repressors of early auxin response genes at low auxin concentrations. Repression is thought to result from the interaction with auxin response factors (ARFs), proteins that bind to the auxin-responsive promoter element (AuxRE). Formation of heterodimers with ARF proteins may alter their ability to modulate early auxin response genes expression. The polypeptide is Auxin-responsive protein IAA10 (IAA10) (Arabidopsis thaliana (Mouse-ear cress)).